A 523-amino-acid polypeptide reads, in one-letter code: NAD(P)H-quinone oxidoreductase subunit 2 (523 aa).

The next 14 helical transmembrane spans lie at 29 to 49 (AIAPEGAVLVAMLATLLVDLA), 57 to 77 (WVPPICYAGLGTALVLLAQQW), 94 to 114 (LAIAFRAVVALSTLLSLLISW), 123 to 143 (PIGEYAAILLAATLGAMLLCG), 147 to 167 (LVSVFVSLETLSVASYLLAGY), 182 to 202 (LLVGSAAAAVFLYGASLLYGL), 221 to 243 (PLAALSLVFVLATVAFKIAAVPF), 255 to 275 (PTPVVAFLSVGSKAAGFALAL), 291 to 311 (LLFTVLAVLSMTLGNVVALAQ), 317 to 337 (MLAYSSIGQAGFVMIGLVCGT), 345 to 365 (VLYMAAYLFMNLGAFACIILF), 389 to 409 (LGLSLCLLSLGGIPPMLGFFG), 424 to 444 (LLVVVGLVTSVVSIYYYISVI), and 477 to 497 (IALVGCVVVTAVGGILSNPLF).

Belongs to the complex I subunit 2 family. As to quaternary structure, NDH-1 can be composed of about 15 different subunits; different subcomplexes with different compositions have been identified which probably have different functions.

The protein resides in the cellular thylakoid membrane. It catalyses the reaction a plastoquinone + NADH + (n+1) H(+)(in) = a plastoquinol + NAD(+) + n H(+)(out). The enzyme catalyses a plastoquinone + NADPH + (n+1) H(+)(in) = a plastoquinol + NADP(+) + n H(+)(out). Functionally, NDH-1 shuttles electrons from an unknown electron donor, via FMN and iron-sulfur (Fe-S) centers, to quinones in the respiratory and/or the photosynthetic chain. The immediate electron acceptor for the enzyme in this species is believed to be plastoquinone. Couples the redox reaction to proton translocation, and thus conserves the redox energy in a proton gradient. Cyanobacterial NDH-1 also plays a role in inorganic carbon-concentration. This Prochlorococcus marinus (strain MIT 9303) protein is NAD(P)H-quinone oxidoreductase subunit 2.